A 608-amino-acid chain; its full sequence is RAS guanyl-releasing protein 2 (608 aa).

The region spanning 4-126 is the N-terminal Ras-GEF domain; the sequence is TLDLDKGCTV…SLIDIENVPT (123 aa). A phosphoserine mark is found at Ser-116, Ser-117, and Ser-147. Residues 154-387 enclose the Ras-GEF domain; it reads EPLELAAHLT…YQLSLQREPR (234 aa). Residues 382 to 407 are disordered; it reads LQREPRSKSSPTSPTTCTPPPRPPVL. 2 consecutive EF-hand domains span residues 426 to 461 and 463 to 490; these read HIEKMVESVFRNFDVDGDGHISQEEFQIIRGNFPYL and AFGDLDQNQDGCISKEEMVSYFLRSSSM. Residues Asp-439, Asp-441, Asp-443, His-445, Glu-450, Asp-468, Asn-470, Asp-472, Cys-474, and Glu-479 each coordinate Ca(2+). The Phorbol-ester/DAG-type zinc-finger motif lies at 498–548; that stretch reads VHNFHESNSLRPVACRHCKALILGIYKQGLKCRACGVNCHKQCKDRLSVEC. Residues Ser-554 and Ser-575 each carry the phosphoserine modification. A disordered region spans residues 556 to 591; the sequence is SLEGSAPSPSPTHTHHRAFSFSLPRPGRRGSRPPEI.

It belongs to the RASGRP family. In terms of assembly, forms a signaling complex with RAP1 and BRAF. Interacts with RAP1. Interacts with F-actin.

The protein localises to the cytoplasm. Its subcellular location is the cytosol. It is found in the cell membrane. It localises to the synapse. The protein resides in the synaptosome. The protein localises to the cell projection. Its subcellular location is the ruffle membrane. Functions as a calcium- and DAG-regulated nucleotide exchange factor specifically activating Rap through the exchange of bound GDP for GTP. May also activate other GTPases such as RRAS, RRAS2, NRAS, KRAS but not HRAS. Functions in aggregation of platelets and adhesion of T-lymphocytes and neutrophils probably through inside-out integrin activation. May function in the muscarinic acetylcholine receptor M1/CHRM1 signaling pathway. This is RAS guanyl-releasing protein 2 (RASGRP2) from Bos taurus (Bovine).